A 712-amino-acid chain; its full sequence is Polyadenylation factor subunit 2 (712 aa).

Residues 1–37 (MTAPTVPADQHGHPLPGPADPAANDTWRPSRYREPLH) are disordered. WD repeat units follow at residues 131 to 170 (KERS…YESI), 173 to 213 (VHDD…HGFQ), 214 to 253 (GHRE…EERS), 256 to 295 (GHGW…DLST), 298 to 337 (SSKS…ELEV), 340 to 380 (GHEK…PSTP), and 387 to 426 (AHED…GGQE). Disordered regions lie at residues 446-473 (TKRE…KQQV) and 489-712 (KTGP…DGRR). Composition is skewed to gly residues over residues 460-469 (AGGGGGGGGD) and 494-504 (TTGGGPSGLPG). Residues 533 to 545 (QGQAQGGQFPRGR) show a composition bias toward low complexity. Basic and acidic residues predominate over residues 565-592 (FADRDRNGGGDRGGMDRDRDSRGGRQDP). Pro residues-rich tracts occupy residues 603 to 612 (GGPPPGPPPG) and 619 to 671 (PPAP…PQGP). Over residues 678-712 (GGQGNYGASASGGYGQYGGGGGGGGGGGYGRDGRR) the composition is skewed to gly residues.

It localises to the nucleus. Its function is as follows. Required for 3'-end cleavage and polyadenylation of pre-mRNAs. Also involved in chromosome segregation where it has a role in chromosome attachment to the mitotic spindle. This Cryptococcus neoformans var. neoformans serotype D (strain JEC21 / ATCC MYA-565) (Filobasidiella neoformans) protein is Polyadenylation factor subunit 2 (PFS2).